A 424-amino-acid polypeptide reads, in one-letter code: Inhibin beta A chain (424 aa).

Residues 1–20 form the signal peptide; the sequence is MPLLWLRGFLLASCWIIVRS. The propeptide occupies 21–308; that stretch reads SPTPGSEGPG…EDHPHRRRRR (288 aa). The N-linked (GlcNAc...) asparagine glycan is linked to N165. Residues 257–288 are disordered; it reads KKKKKEEEGEGKKKDGGDGGAGADEDKEQSHR. Positions 261 to 273 are enriched in basic and acidic residues; it reads KEEEGEGKKKDGG. Cystine bridges form between C312-C320, C319-C389, C348-C421, and C352-C423.

This sequence belongs to the TGF-beta family. Dimeric, linked by one or more disulfide bonds. Inhibin A is a dimer of alpha/INHA and beta-A/INHBA. Activin A is a homodimer of beta-A/INHBA. Activin AB is a dimer of beta-A/INHBA and beta-B/INHBB. Interacts with FST and FSTL3; these interactions prevent activin A interaction to its type II receptor. Activin A interacts with ACVR2A. Activin A interacts with BMPR2. Inhibin A interacts with ACVR1; this interaction creates a non-signaling complex (NSC) that inhibits ACVR1-mediated BMP signaling. Inhibin A interacts with ACVR2A.

The protein resides in the secreted. Functionally, inhibins/activins are involved in regulating a number of diverse functions such as hypothalamic and pituitary hormone secretion, gonadal hormone secretion, germ cell development and maturation, erythroid differentiation, insulin secretion, nerve cell survival, embryonic axial development or bone growth, depending on their subunit composition. In terms of biological role, activin A is a homodimer of INHBA that plays a role in several essential biological processes including embryonic development, stem cell maintenance and differentiation, haematopoiesis, cell proliferation and tissue fibrosis. Signals through type I (such as ACVR1B or ACVR1C) and type II receptors (such as ACVR2A, ACVR2B or BMPR2) which, upon ligand binding, phosphorylate SMAD2 and SMAD3 intracellular signaling mediators that form a complex with SMAD4, translocate to the nucleus and modulate gene expression. Can also activate alternative non-canonical intracellular signaling pathways including the p38 MAPK, extracellular signal-regulated kinases 1/2 (ERK1/2) and c-Jun N-terminal kinases (JNKs) to modulate cell migration and differentiation. Alternatively, promotes osteoblastic differentiation via ACVRL1-SMAD1/5/9 pathway. In addition, can engage the type I receptor ACVR1 to form an ACVR1-activin A-type II receptor non-signaling complex (NSC) that renders receptors unavailable for engagement with BMPs, hence resulting in an apparent inhibition of ACVR1-mediated BMP signaling. Inhibin A is a dimer of alpha/INHA and beta-A/INHBA that functions as a feedback regulator in the hypothalamic-pituitary-gonadal (HPG) axis. Inhibits the secretion of FSH from the anterior pituitary gland by acting on pituitary gonadotrope cells. Antagonizes activin A by binding to the proteoglycan, betaglycan, and forming a stable complex with and, thereby, sequestering type II activin receptors while excluding type I receptor. This chain is Inhibin beta A chain (INHBA), found in Felis catus (Cat).